Here is a 326-residue protein sequence, read N- to C-terminus: Protease HtpX homolog (326 aa).

2 helical membrane-spanning segments follow: residues 10–30 and 41–61; these read LNMA…ALAV and VGLM…QWLF. His-147 contacts Zn(2+). Residue Glu-148 is part of the active site. Residue His-151 coordinates Zn(2+). Helical transmembrane passes span 159–179 and 197–217; these read LLMA…WIFW and LLFL…LLVL. Glu-224 is a binding site for Zn(2+).

It belongs to the peptidase M48B family. It depends on Zn(2+) as a cofactor.

The protein localises to the cell membrane. This is Protease HtpX homolog from Saccharolobus islandicus (strain Y.N.15.51 / Yellowstone #2) (Sulfolobus islandicus).